A 338-amino-acid chain; its full sequence is Ribonucleoside-diphosphate reductase small subunit (338 aa).

Positions 81, 112, and 115 each coordinate Fe cation. The active site involves tyrosine 119. Positions 174, 208, and 211 each coordinate Fe cation.

This sequence belongs to the ribonucleoside diphosphate reductase small chain family. Heterodimer of a large and a small subunit. Fe cation is required as a cofactor.

It localises to the cytoplasm. It catalyses the reaction a 2'-deoxyribonucleoside 5'-diphosphate + [thioredoxin]-disulfide + H2O = a ribonucleoside 5'-diphosphate + [thioredoxin]-dithiol. Functionally, provides the precursors necessary for DNA synthesis. Catalyzes the biosynthesis of deoxyribonucleotides from the corresponding ribonucleotides. The chain is Ribonucleoside-diphosphate reductase small subunit (rnrB-1) from Dictyostelium discoideum (Social amoeba).